A 187-amino-acid polypeptide reads, in one-letter code: Putative manganese efflux pump MntP (187 aa).

6 helical membrane-spanning segments follow: residues 3–23 (YYTL…VSVG), 39–59 (IALC…YVGS), 65–85 (ISEF…INMI), 106–126 (LTML…SFAF), 129–149 (VNIW…SLFG), and 166–186 (LLGG…HRVF).

The protein belongs to the MntP (TC 9.B.29) family.

It localises to the cell inner membrane. Probably functions as a manganese efflux pump. This Actinobacillus succinogenes (strain ATCC 55618 / DSM 22257 / CCUG 43843 / 130Z) protein is Putative manganese efflux pump MntP.